Consider the following 202-residue polypeptide: Amelogenin (202 aa).

At serine 16 the chain carries Phosphoserine. Residues 77–202 (QPAPPQQPVM…TDKTKREEVD (126 aa)) form a disordered region. Over residues 78-87 (PAPPQQPVMP) the composition is skewed to pro residues. The segment covering 101-112 (QPNLPQPGQQPY) has biased composition (low complexity). A compositionally biased stretch (pro residues) spans 113-125 (QPQPAQQPQPHQP). Positions 126-158 (IQPIQPIQPIQPMQPMQPMQPMQPMQPMQPQTP) are enriched in low complexity. Positions 164-176 (PLPPQPPLPPMFP) are enriched in pro residues.

This sequence belongs to the amelogenin family.

It localises to the secreted. It is found in the extracellular space. Its subcellular location is the extracellular matrix. Functionally, plays a role in the biomineralization of teeth. Seems to regulate the formation of crystallites during the secretory stage of tooth enamel development. Thought to play a major role in the structural organization and mineralization of developing enamel. This Monodelphis domestica (Gray short-tailed opossum) protein is Amelogenin (AMEL).